Reading from the N-terminus, the 239-residue chain is Small ribosomal subunit protein uS3 (239 aa).

The KH type-2 domain maps to R40–N108. The segment at K212 to E239 is disordered. The segment covering A215–P226 has biased composition (basic and acidic residues). Positions R227–E239 are enriched in basic residues.

The protein belongs to the universal ribosomal protein uS3 family. As to quaternary structure, part of the 30S ribosomal subunit. Forms a tight complex with proteins S10 and S14.

In terms of biological role, binds the lower part of the 30S subunit head. Binds mRNA in the 70S ribosome, positioning it for translation. The sequence is that of Small ribosomal subunit protein uS3 (rpsC) from Thermus thermophilus (strain ATCC BAA-163 / DSM 7039 / HB27).